The sequence spans 1283 residues: Bifunctional dioxygenase (DOX)-epoxy alcohol synthase (EAS) (1283 aa).

A disordered region spans residues 1–64 (MAEHKNGVAT…LPKEMGDGSY (64 aa)). Positions 130 to 476 (TNSFISQLWN…DGKFNDDELV (347 aa)) are fatty acid alpha-dioxygenase. Heme b is bound at residue His-227. Tyr-405 is a catalytic residue. Position 408 (His-408) interacts with heme b. The epoxy alcohol synthase stretch occupies residues 684 to 1108 (INIIGYNAAK…WDDGCGTDLF (425 aa)). Heme is bound at residue Cys-1035.

This sequence in the N-terminal section; belongs to the peroxidase family. It in the C-terminal section; belongs to the cytochrome P450 family. In terms of assembly, homotetramer. Heme b serves as cofactor. Requires heme as cofactor.

It carries out the reaction (9Z,12Z)-octadecadienoate + O2 = (8E,10R,12Z)-10-hydroperoxyoctadeca-8,12-dienoate. The catalysed reaction is (8E,10R,12Z)-10-hydroperoxyoctadeca-8,12-dienoate = (12S,13R)-epoxy-(10R)-hydroxy-(8E)-octadecenoate. The enzyme catalyses (9Z)-octadecenoate + O2 = (8R)-hydroperoxy-(9Z)-octadecenoate. In terms of biological role, bifunctional dioxygenase (DOX)-epoxy alcohol synthase (EAS) that converts linoleic acid (18:2n-6) sequentially to 10(R)-hydroperoxy-8(E),12(Z)-octadecadienoic acid (10R-HPODE) and 10R-HPODE further to 12(13)-epoxy-10-hydroxy-8(E)-octa-decenoic acid as the end product. Linoleic acid is oxidized mainly to the R stereoisomer of 10-HPODE. The dioxygenase domain is also able to oygenate position C-8 of linoleic acid to produce 8(R)-hydroperoxy-8(E),12(Z)-octadecadienoic acid (8R-HPODE). The polypeptide is Bifunctional dioxygenase (DOX)-epoxy alcohol synthase (EAS) (Fusarium oxysporum (strain Fo5176) (Fusarium vascular wilt)).